We begin with the raw amino-acid sequence, 203 residues long: MFEGPVQDLIDELGKLPGIGPKSAQRIAFHLLSVEPPDIDRLTAVLNKVRDGVTFCAVCGNVSDEERCRICGDARRDASLICVVEEPKDVQAVERTREFRGRYHVLGGALDPLSGIGPDQLRIRELLNRIGERVDGVEVAEVIIATDPNTEGEATATYLVRMLRDIPGLTVTRIASGLPMGGDLEFADELTLGRALAGRRAMA.

Residues 56–71 (CAVCGNVSDEERCRIC) form a C4-type zinc finger. The 101-residue stretch at 79–179 (SLICVVEEPK…TVTRIASGLP (101 aa)) folds into the Toprim domain.

Belongs to the RecR family.

May play a role in DNA repair. It seems to be involved in an RecBC-independent recombinational process of DNA repair. It may act with RecF and RecO. In Mycolicibacterium vanbaalenii (strain DSM 7251 / JCM 13017 / BCRC 16820 / KCTC 9966 / NRRL B-24157 / PYR-1) (Mycobacterium vanbaalenii), this protein is Recombination protein RecR.